We begin with the raw amino-acid sequence, 352 residues long: Holliday junction branch migration complex subunit RuvB (352 aa).

Residues 5–191 form a large ATPase domain (RuvB-L) region; the sequence is TDDFSEQRII…FGIVARLEFY (187 aa). ATP contacts are provided by residues leucine 30, arginine 31, glycine 72, lysine 75, threonine 76, threonine 77, 138 to 140, arginine 181, tyrosine 191, and arginine 228; that span reads EDY. Position 76 (threonine 76) interacts with Mg(2+). The small ATPAse domain (RuvB-S) stretch occupies residues 192-262; sequence TPLELTKIVT…MADAALVMLD (71 aa). Positions 265 to 352 are head domain (RuvB-H); it reads PVGFDLMDRK…GPNGDLWAGQ (88 aa). Residues arginine 301, arginine 320, and arginine 325 each contribute to the DNA site.

The protein belongs to the RuvB family. Homohexamer. Forms an RuvA(8)-RuvB(12)-Holliday junction (HJ) complex. HJ DNA is sandwiched between 2 RuvA tetramers; dsDNA enters through RuvA and exits via RuvB. An RuvB hexamer assembles on each DNA strand where it exits the tetramer. Each RuvB hexamer is contacted by two RuvA subunits (via domain III) on 2 adjacent RuvB subunits; this complex drives branch migration. In the full resolvosome a probable DNA-RuvA(4)-RuvB(12)-RuvC(2) complex forms which resolves the HJ.

It localises to the cytoplasm. The enzyme catalyses ATP + H2O = ADP + phosphate + H(+). Functionally, the RuvA-RuvB-RuvC complex processes Holliday junction (HJ) DNA during genetic recombination and DNA repair, while the RuvA-RuvB complex plays an important role in the rescue of blocked DNA replication forks via replication fork reversal (RFR). RuvA specifically binds to HJ cruciform DNA, conferring on it an open structure. The RuvB hexamer acts as an ATP-dependent pump, pulling dsDNA into and through the RuvAB complex. RuvB forms 2 homohexamers on either side of HJ DNA bound by 1 or 2 RuvA tetramers; 4 subunits per hexamer contact DNA at a time. Coordinated motions by a converter formed by DNA-disengaged RuvB subunits stimulates ATP hydrolysis and nucleotide exchange. Immobilization of the converter enables RuvB to convert the ATP-contained energy into a lever motion, pulling 2 nucleotides of DNA out of the RuvA tetramer per ATP hydrolyzed, thus driving DNA branch migration. The RuvB motors rotate together with the DNA substrate, which together with the progressing nucleotide cycle form the mechanistic basis for DNA recombination by continuous HJ branch migration. Branch migration allows RuvC to scan DNA until it finds its consensus sequence, where it cleaves and resolves cruciform DNA. This Janthinobacterium sp. (strain Marseille) (Minibacterium massiliensis) protein is Holliday junction branch migration complex subunit RuvB.